Here is an 84-residue protein sequence, read N- to C-terminus: Subtilisin-chymotrypsin inhibitor WSCI (84 aa).

The signal sequence occupies residues 1–12; the sequence is MSSVVKKPLGGN. A disordered region spans residues 1 to 28; that stretch reads MSSVVKKPLGGNTDTGDHHNQKTEWPEL. Residues 15–25 are compositionally biased toward basic and acidic residues; that stretch reads TGDHHNQKTEW.

Monomer.

The protein resides in the secreted. Functionally, inhibits B.lichenoformis subtilisin, B.subtilis subtilisin, bovine pancreatic alpha-chymotrypsin and porcine alpha-chymotrypsin with Ki of 3.92 nM, 5.70 nM, 7.24 nM and 9.35 nM respectively. B.lichenoformis subtilisin is inhibited with a molar ratio of 1:0.87. Also inhibits chymotrypsin-like activities from the digestive tracts of the insect larvae T.molitor, P.interpunctella and H.armigera. Does not inhibit bovine pancreatic trypsin, porcine pancreatic elastase, or human leukocyte elastase. The protein is Subtilisin-chymotrypsin inhibitor WSCI of Triticum aestivum (Wheat).